A 28-amino-acid polypeptide reads, in one-letter code: Palustrin-1a (28 aa).

Cys22 and Cys28 are disulfide-bonded.

In terms of tissue distribution, expressed by the skin glands.

The protein localises to the secreted. Antimicrobial activity against Gram-negative bacterium E.coli. This is Palustrin-1a from Lithobates palustris (Pickerel frog).